The following is a 61-amino-acid chain: Small ribosomal subunit protein uS14 (61 aa).

Residues Cys-24, Cys-27, Cys-40, and Cys-43 each coordinate Zn(2+).

This sequence belongs to the universal ribosomal protein uS14 family. Zinc-binding uS14 subfamily. Part of the 30S ribosomal subunit. Contacts proteins S3 and S10. It depends on Zn(2+) as a cofactor.

Binds 16S rRNA, required for the assembly of 30S particles and may also be responsible for determining the conformation of the 16S rRNA at the A site. The chain is Small ribosomal subunit protein uS14 from Streptococcus mutans serotype c (strain ATCC 700610 / UA159).